The sequence spans 1944 residues: Anaphase-promoting complex subunit 1 (1944 aa).

4 positions are modified to phosphoserine: Ser-51, Ser-60, Ser-202, and Ser-286. A Phosphothreonine modification is found at Thr-291. Positions 305–343 are disordered; the sequence is LRSLSKGDSPVTSPFQNYSSIHSQSRSTSSPSLHSRSPS. A phosphoserine mark is found at Ser-313, Ser-341, Ser-343, Ser-355, Ser-362, Ser-373, and Ser-377. Residues 323–343 are compositionally biased toward low complexity; the sequence is SSIHSQSRSTSSPSLHSRSPS. The disordered stretch occupies residues 373–396; the sequence is SHNQSPKRHSISHSPNSNSNGSFL. Residues 384–394 show a composition bias toward low complexity; it reads SHSPNSNSNGS. At Thr-537 the chain carries Phosphothreonine. Residues Ser-547 and Ser-555 each carry the phosphoserine modification. Residue Tyr-571 is modified to Phosphotyrosine. 3 positions are modified to phosphoserine: Ser-686, Ser-688, and Ser-916. The disordered stretch occupies residues 994–1016; that stretch reads KGKSVLSSDVPSGTETEEEDDGM. A compositionally biased stretch (polar residues) spans 998 to 1007; it reads VLSSDVPSGT. PC repeat units follow at residues 1297 to 1325, 1366 to 1404, 1467 to 1501, and 1520 to 1552; these read AAGLALGMVCLGHGSNLIGMSDLNVPEQL, GATLALAMIYLKTNNRSIADWLRAPDTMYLLDFVKPEFL, GACLSLGFRFAGSENLSAFNCLHKFAKDFMTYLSA, and LLSLAMVMAGSGNLKVLQLCRFLHMKTGGEMNY.

It belongs to the APC1 family. In terms of assembly, the mammalian APC/C is composed at least of 14 distinct subunits ANAPC1, ANAPC2, CDC27/APC3, ANAPC4, ANAPC5, CDC16/APC6, ANAPC7, CDC23/APC8, ANAPC10, ANAPC11, CDC26/APC12, ANAPC13, ANAPC15 and ANAPC16 that assemble into a complex of at least 19 chains with a combined molecular mass of around 1.2 MDa; APC/C interacts with FZR1 and FBXO5. Post-translationally, phosphorylated. Phosphorylation on Ser-355 occurs specifically during mitosis.

Its pathway is protein modification; protein ubiquitination. Functionally, component of the anaphase promoting complex/cyclosome (APC/C), a cell cycle-regulated E3 ubiquitin ligase that controls progression through mitosis and the G1 phase of the cell cycle. The APC/C complex acts by mediating ubiquitination and subsequent degradation of target proteins: it mainly mediates the formation of 'Lys-11'-linked polyubiquitin chains and, to a lower extent, the formation of 'Lys-48'- and 'Lys-63'-linked polyubiquitin chains. The APC/C complex catalyzes assembly of branched 'Lys-11'-/'Lys-48'-linked branched ubiquitin chains on target proteins. This chain is Anaphase-promoting complex subunit 1 (ANAPC1), found in Homo sapiens (Human).